We begin with the raw amino-acid sequence, 598 residues long: MGDYKSAKEAFVSDNPGASIWSINAVSLVALATYALWIALSPYIRHGLLNNYLICVLPLLFGVTIFSTSPLVFTSFLSIISLAFITKSQKCFKSVSSPEKPKGQWLDESDSDEEPAEPASAAGSAAVSPVKLLPSQVAFASGSLLSPDPTTSPMSPSSSSASGHEDPLGIMGVNRRRSLLEGVSLDVPSHIDSKVRISPVPYLRLKKSRATKAQWVKEKGRLPFLTVYRAHMMLMTVICILAVDFEVFPRWQGKCEDFGTSLMDVGVGSFVFSLGLVSTKSLSPPPPTPTPSSPALNSHIIPLTPSPFTSILISLRKSIPILVLGFIRLIMVKGSDYPEHVTEYGVHWNFFFTLALVPVLAVGIRPLTQWLRWSVLGVIISLLHQLWLTYYLQSIVFSFGRSGIFLANKEGFSSLPGYLSIFLIGLSIGDHVLRLSLPPRRERVVSETNEEHEQSHFERKKLDLIMELIGYSLGWWALLGGWIWAGGEVSRRLANAPYVFWVAAYNTTFLLGYLLLTHIIPSPTSSQTSPSILVPPLLDAMNKNGLAIFLAANLLTGLVNVSMKTMYAPAWLSMGVLMLYTLTISCVGWILKGRRIKI.

2 consecutive transmembrane segments (helical) span residues 20 to 40 (IWSINAVSLVALATYALWIAL) and 53 to 73 (LICVLPLLFGVTIFSTSPLVF). Disordered stretches follow at residues 94-127 (SVSSPEKPKGQWLDESDSDEEPAEPASAAGSAAV) and 144-167 (LLSPDPTTSPMSPSSSSASGHEDP). The span at 107 to 116 (DESDSDEEPA) shows a compositional bias: acidic residues. 2 stretches are compositionally biased toward low complexity: residues 117 to 127 (EPASAAGSAAV) and 144 to 162 (LLSPDPTTSPMSPSSSSAS). Transmembrane regions (helical) follow at residues 223 to 243 (PFLTVYRAHMMLMTVICILAV), 258 to 278 (FGTSLMDVGVGSFVFSLGLVS), 307 to 327 (PFTSILISLRKSIPILVLGFI), 344 to 364 (YGVHWNFFFTLALVPVLAVGI), 377 to 397 (GVIISLLHQLWLTYYLQSIVF), 412 to 432 (FSSLPGYLSIFLIGLSIGDHV), 464 to 484 (LIMELIGYSLGWWALLGGWIW), and 500 to 520 (FWVAAYNTTFLLGYLLLTHII). A glycan (N-linked (GlcNAc...) asparagine) is linked at Asn560. The chain crosses the membrane as a helical span at residues 571–591 (WLSMGVLMLYTLTISCVGWIL).

The protein belongs to the PIGW family.

The protein resides in the endoplasmic reticulum membrane. It functions in the pathway glycolipid biosynthesis; glycosylphosphatidylinositol-anchor biosynthesis. Its function is as follows. Probable acetyltransferase, which acetylates the inositol ring of phosphatidylinositol during biosynthesis of GPI-anchor. In Cryptococcus neoformans var. grubii serotype A (strain H99 / ATCC 208821 / CBS 10515 / FGSC 9487) (Filobasidiella neoformans var. grubii), this protein is GPI-anchored wall transfer protein 1 (GWT1).